A 387-amino-acid polypeptide reads, in one-letter code: Cysteine desulfurase IscS (387 aa).

Pyridoxal 5'-phosphate contacts are provided by residues 73–74 (AT), Asn-155, Gln-183, and 203–205 (SAH). Lys-206 is modified (N6-(pyridoxal phosphate)lysine). Thr-241 lines the pyridoxal 5'-phosphate pocket. Cys-328 functions as the Cysteine persulfide intermediate in the catalytic mechanism. A [2Fe-2S] cluster-binding site is contributed by Cys-328.

Belongs to the class-V pyridoxal-phosphate-dependent aminotransferase family. NifS/IscS subfamily. In terms of assembly, homodimer. Forms a heterotetramer with IscU, interacts with other sulfur acceptors. Requires pyridoxal 5'-phosphate as cofactor.

The protein localises to the cytoplasm. The enzyme catalyses (sulfur carrier)-H + L-cysteine = (sulfur carrier)-SH + L-alanine. Its pathway is cofactor biosynthesis; iron-sulfur cluster biosynthesis. Its function is as follows. Master enzyme that delivers sulfur to a number of partners involved in Fe-S cluster assembly, tRNA modification or cofactor biosynthesis. Catalyzes the removal of elemental sulfur atoms from cysteine to produce alanine. Functions as a sulfur delivery protein for Fe-S cluster synthesis onto IscU, an Fe-S scaffold assembly protein, as well as other S acceptor proteins. This chain is Cysteine desulfurase IscS, found in Helicobacter pylori (strain Shi470).